Consider the following 175-residue polypeptide: Co-chaperone protein HscB homolog (175 aa).

In terms of domain architecture, J spans 7-79 (SHFDLFHLPA…LQRASYLLSL (73 aa)).

Belongs to the HscB family. In terms of assembly, interacts with HscA and stimulates its ATPase activity.

Co-chaperone involved in the maturation of iron-sulfur cluster-containing proteins. Seems to help targeting proteins to be folded toward HscA. The protein is Co-chaperone protein HscB homolog of Burkholderia vietnamiensis (strain G4 / LMG 22486) (Burkholderia cepacia (strain R1808)).